The following is a 1904-amino-acid chain: Fatty acid synthase beta subunit hexB (1904 aa).

The interval 24 to 395 (LSVAFGGQGP…TEGTGVRVIQ (372 aa)) is acetyltransferase (AT) domain. Residues 447 to 691 (TQLLNAPPVM…LIVQTEGVGD (245 aa)) form an enoyl reductase (ER) domain region. The segment at 1001–1491 (GPAADCWTHH…RPNDRLKIQL (491 aa)) is dehydratase (DH) domain. Positions 1399–1512 (PGWNEGSTVL…MKVQAFNDET (114 aa)) constitute a MaoC-like domain. Residues 1530–1893 (YVFCGQGSQE…IEHVQSVTGS (364 aa)) form a malonyl/palmitoyl transferase (MT/PT) domain region.

This sequence belongs to the fungal fatty acid synthetase subunit beta family. [Alpha(6)beta(6)] hexamers of two multifunctional subunits (alpha and beta).

The enzyme catalyses acetyl-CoA + n malonyl-CoA + 2n NADPH + 4n H(+) = a long-chain-acyl-CoA + n CoA + n CO2 + 2n NADP(+).. It carries out the reaction holo-[ACP] + acetyl-CoA = acetyl-[ACP] + CoA. It catalyses the reaction holo-[ACP] + malonyl-CoA = malonyl-[ACP] + CoA. The catalysed reaction is a (3R)-hydroxyacyl-[ACP] = a (2E)-enoyl-[ACP] + H2O. The enzyme catalyses a 2,3-saturated acyl-[ACP] + NAD(+) = a (2E)-enoyl-[ACP] + NADH + H(+). It carries out the reaction (9Z)-octadecenoyl-[ACP] + H2O = (9Z)-octadecenoate + holo-[ACP] + H(+). It functions in the pathway mycotoxin biosynthesis. Its function is as follows. Fatty acid synthase beta subunit; part of the fragmented gene cluster that mediates the biosynthesis of dothistromin (DOTH), a polyketide toxin very similar in structure to the aflatoxin precursor, versicolorin B. The first step of the pathway is the conversion of acetate to norsolorinic acid (NOR) and requires the fatty acid synthase subunits hexA and hexB, as well as the polyketide synthase pksA. PksA combines a hexanoyl starter unit and 7 malonyl-CoA extender units to synthesize the precursor NOR. The hexanoyl starter unit is provided to the acyl-carrier protein (ACP) domain by the fungal fatty acid synthase hexA/hexB. The second step is the conversion of NOR to averantin (AVN) and requires the norsolorinic acid ketoreductase nor1, which catalyzes the dehydration of norsolorinic acid to form (1'S)-averantin. The cytochrome P450 monooxygenase avnA then catalyzes the hydroxylation of AVN to 5'hydroxyaverantin (HAVN). The next step is performed by adhA that transforms HAVN to averufin (AVF). Averufin might then be converted to hydroxyversicolorone by cypX and avfA. Hydroxyversicolorone is further converted versiconal hemiacetal acetate (VHA) by moxY. VHA is then the substrate for the versiconal hemiacetal acetate esterase est1 to yield versiconal (VAL). Versicolorin B synthase vbsA then converts VAL to versicolorin B (VERB) by closing the bisfuran ring. Then, the activity of the versicolorin B desaturase verB leads to versicolorin A (VERA). DotB, a predicted chloroperoxidase, may perform epoxidation of the A-ring of VERA. Alternatively, a cytochrome P450, such as cypX or avnA could catalyze this step. It is also possible that another, uncharacterized, cytochrome P450 enzyme is responsible for this step. Opening of the epoxide could potentially be achieved by the epoxide hydrolase epoA. However, epoA seems not to be required for DOTH biosynthesis, but other epoxide hydrolases may have the ability to complement this hydrolysis. Alternatively, opening of the epoxide ring could be achieved non-enzymatically. The next step is the deoxygenation of ring A to yield the 5,8-dihydroxyanthraquinone which is most likely catalyzed by the NADPH dehydrogenase encoded by ver1. The last stages of DOTH biosynthesis are proposed to involve hydroxylation of the bisfuran. OrdB and norB might have oxidative roles here. An alternative possibility is that cytochrome P450 monoogenases such as avnA and cypX might perform these steps in addition to previously proposed steps. In Dothistroma septosporum (strain NZE10 / CBS 128990) (Red band needle blight fungus), this protein is Fatty acid synthase beta subunit hexB.